Here is a 346-residue protein sequence, read N- to C-terminus: Very-long-chain 3-oxoacyl-CoA reductase (346 aa).

The chain crosses the membrane as a helical span at residues 26 to 46 (TASVLLVAGGWFVVSRVWTFL). NADP(+)-binding residues include Ile71, Asp126, Asp134, Asn153, Tyr220, Lys224, Ile253, and Ser255. The active-site Proton donor is the Tyr220. The active-site Lowers pKa of active site Tyr is Lys224.

Belongs to the short-chain dehydrogenases/reductases (SDR) family.

Its subcellular location is the endoplasmic reticulum membrane. The catalysed reaction is a very-long-chain (3R)-3-hydroxyacyl-CoA + NADP(+) = a very-long-chain 3-oxoacyl-CoA + NADPH + H(+). The protein operates within lipid metabolism; fatty acid biosynthesis. Its function is as follows. Component of the microsomal membrane bound fatty acid elongation system, which produces the 26-carbon very long-chain fatty acids (VLCFA) from palmitate. Catalyzes the reduction of the 3-ketoacyl-CoA intermediate that is formed in each cycle of fatty acid elongation. VLCFAs serve as precursors for ceramide and sphingolipids. This is Very-long-chain 3-oxoacyl-CoA reductase from Emericella nidulans (strain FGSC A4 / ATCC 38163 / CBS 112.46 / NRRL 194 / M139) (Aspergillus nidulans).